A 358-amino-acid polypeptide reads, in one-letter code: Phosphoribosylformylglycinamidine cyclo-ligase (358 aa).

This sequence belongs to the AIR synthase family.

The protein resides in the cytoplasm. It carries out the reaction 2-formamido-N(1)-(5-O-phospho-beta-D-ribosyl)acetamidine + ATP = 5-amino-1-(5-phospho-beta-D-ribosyl)imidazole + ADP + phosphate + H(+). It functions in the pathway purine metabolism; IMP biosynthesis via de novo pathway; 5-amino-1-(5-phospho-D-ribosyl)imidazole from N(2)-formyl-N(1)-(5-phospho-D-ribosyl)glycinamide: step 2/2. In Nitrosococcus oceani (strain ATCC 19707 / BCRC 17464 / JCM 30415 / NCIMB 11848 / C-107), this protein is Phosphoribosylformylglycinamidine cyclo-ligase.